The chain runs to 289 residues: ATP synthase subunit a (289 aa).

Helical transmembrane passes span 43-63 (AFHL…VLIF), 104-124 (IAPL…VDLI), 160-180 (LSVF…GGFI), 193-213 (IFVQ…TLIA), 232-252 (VFIL…GLGV), and 259-279 (AVFH…LTIV).

Belongs to the ATPase A chain family. As to quaternary structure, F-type ATPases have 2 components, CF(1) - the catalytic core - and CF(0) - the membrane proton channel. CF(1) has five subunits: alpha(3), beta(3), gamma(1), delta(1), epsilon(1). CF(0) has three main subunits: a(1), b(2) and c(9-12). The alpha and beta chains form an alternating ring which encloses part of the gamma chain. CF(1) is attached to CF(0) by a central stalk formed by the gamma and epsilon chains, while a peripheral stalk is formed by the delta and b chains.

The protein resides in the cell inner membrane. Functionally, key component of the proton channel; it plays a direct role in the translocation of protons across the membrane. The polypeptide is ATP synthase subunit a (Pseudomonas fluorescens (strain SBW25)).